The sequence spans 394 residues: Potassium channel subfamily K member 18 (394 aa).

Topologically, residues methionine 1–leucine 31 are cytoplasmic. The chain crosses the membrane as a helical span at residues leucine 32–phenylalanine 52. N-linked (GlcNAc...) asparagine glycosylation occurs at asparagine 83. The pore-forming intramembrane region spans phenylalanine 114 to glycine 140. Positions 127, 128, 129, and 130 each coordinate K(+). The tract at residues threonine 127–histidine 132 is selectivity filter 1. The chain crosses the membrane as a helical span at residues phenylalanine 142–isoleucine 162. Residues glycine 163 to aspartate 292 are Cytoplasmic-facing. Residues proline 210–aspartate 215 form an interaction with calcineurin region. An interaction with YWHAH region spans residues arginine 261–proline 266. Phosphoserine is present on residues serine 264 and serine 276. The chain crosses the membrane as a helical span at residues isoleucine 293–leucine 313. The pore-forming intramembrane region spans phenylalanine 326–aspartate 340. Positions threonine 335–aspartate 340 are selectivity filter 2. A helical membrane pass occupies residues histidine 347 to phenylalanine 367. Over lysine 368–tryptophan 394 the chain is Cytoplasmic.

The protein belongs to the two pore domain potassium channel (TC 1.A.1.8) family. In terms of assembly, homodimer. Heterodimer with KCNK2. Heterodimer with KCNK10. Interacts with calcineurin. Interacts with YWHAH, in a phosphorylation-dependent manner. Post-translationally, phosphorylation of Ser-264 is required for the binding of 14-3-3eta/YWHAH. Calcineurin-mediated dephosphorylation of Ser-276 enhances channel activity. N-glycosylated. As to expression, detected in brain cortex, cerebellum, dorsal root ganglion, spinal cord and testis. High expression in trigeminal ganglion (at protein level), also expressed in autonomic nervous system ganglia such as the stellate ganglion and paravertebral sympathetic ganglia. Expressed in all adult spinal cord and brain regions, with slightly higher expression in thalamus, hypothalamus, hippocampus and posterior corte (at protein level). In non-neuronal tissues, substantial expression found in lung and heart and weal expression in liver, testis, kidney, small intestine and spleen. Expressed in regulatory T cells (at protein level).

It is found in the cell membrane. The catalysed reaction is K(+)(in) = K(+)(out). Its activity is regulated as follows. Activated upon cell stimulation via Ca(2+)-mobilizing receptors, such as CHRM1/M1 muscarinic receptor and AGTR1/AT1a angiotensin receptor. Activated by volatile anesthetics, such as isoflurane and inhibited by local anesthetics such as bupivacaine and lidocaine. Inhibited by extracellular acidic pH. Inhibited by Zn(2+) ions. Inhibited by hydroxy-alpha-sanshool, an ingredient of Schezuan pepper. Inhibited by Ba(2+) ions. Functionally, k(+) channel that conducts outward and inward rectifying currents at depolarized and hyperpolarized membrane potentials, respectively. The outward rectifying currents are voltage-dependent, coupled to K(+) electrochemical gradient across the membrane, whereas the inward currents can be induced in response to activation of Ca(2+)-mobilizing receptors. Homo- and heterodimerizes to form functional channels with distinct regulatory and gating properties. In trigeminal ganglia sensory neurons, the heterodimers of KCNK18/TRESK and KCNK2/TREK-1 or KCNK10/TREK-2 inhibit neuronal firing and neurogenic inflammation by stabilizing the resting membrane potential at K(+) equilibrium potential as well as by regulating the threshold of action potentials and the spike frequency. In thymocytes, conducts K(+) currents upon T cell receptor (TCR) signaling leading to sustained Ca(2+) influx and NF-kappa-B activation, FOXP3 transcription and positive selection of regulatory T cell (Treg) progenitor subsets. Appears to mediate the analgesics effects of hydroxy-alpha-sanshool, a metabolite naturally present in Schezuan pepper and other Xanthoxylum plants. The protein is Potassium channel subfamily K member 18 of Mus musculus (Mouse).